A 325-amino-acid polypeptide reads, in one-letter code: Elongation factor P--(R)-beta-lysine ligase (325 aa).

Position 76 to 78 (S76 to E78) interacts with substrate. Residues R100–E102 and N109 each bind ATP. Y118 is a binding site for substrate. ATP is bound at residue E244–L245. E251 contributes to the substrate binding site. An ATP-binding site is contributed by G300.

Belongs to the class-II aminoacyl-tRNA synthetase family. EpmA subfamily. Homodimer.

The catalysed reaction is D-beta-lysine + L-lysyl-[protein] + ATP = N(6)-((3R)-3,6-diaminohexanoyl)-L-lysyl-[protein] + AMP + diphosphate + H(+). Functionally, with EpmB is involved in the beta-lysylation step of the post-translational modification of translation elongation factor P (EF-P). Catalyzes the ATP-dependent activation of (R)-beta-lysine produced by EpmB, forming a lysyl-adenylate, from which the beta-lysyl moiety is then transferred to the epsilon-amino group of a conserved specific lysine residue in EF-P. This is Elongation factor P--(R)-beta-lysine ligase from Proteus mirabilis (strain HI4320).